The chain runs to 244 residues: Ureidoacrylate amidohydrolase RutB (244 aa).

Aspartate 38 (proton acceptor) is an active-site residue. Residue lysine 147 is part of the active site. The active-site Nucleophile is cysteine 180.

Belongs to the isochorismatase family. RutB subfamily.

It catalyses the reaction (Z)-3-ureidoacrylate + H2O + H(+) = (Z)-3-aminoacrylate + NH4(+) + CO2. The enzyme catalyses (Z)-3-ureidoacrylate + H2O = (Z)-3-aminoacrylate + carbamate + H(+). The catalysed reaction is (Z)-2-methylureidoacrylate + H2O + H(+) = (Z)-2-methylaminoacrylate + NH4(+) + CO2. Its function is as follows. Hydrolyzes ureidoacrylate to form aminoacrylate and carbamate. The carbamate hydrolyzes spontaneously, thereby releasing one of the nitrogen atoms of the pyrimidine ring as ammonia and one of its carbon atoms as CO2. This Escherichia coli O55:H7 (strain CB9615 / EPEC) protein is Ureidoacrylate amidohydrolase RutB.